Reading from the N-terminus, the 206-residue chain is Small ribosomal subunit protein uS4c (206 aa).

2 stretches are compositionally biased toward basic residues: residues 1–13 and 25–34; these read MSRYRGPKLRITR and QSKKKGRPGQ. The segment at 1 to 50 is disordered; sequence MSRYRGPKLRITRRLGALPGLTQKQSKKKGRPGQHGKSNEADNSKKTTEY. A compositionally biased stretch (basic and acidic residues) spans 37–50; that stretch reads KSNEADNSKKTTEY. One can recognise an S4 RNA-binding domain in the interval 95–157; that stretch reads MRLDTICFTL…ATSKNLVEGN (63 aa).

This sequence belongs to the universal ribosomal protein uS4 family. Part of the 30S ribosomal subunit. Contacts protein S5. The interaction surface between S4 and S5 is involved in control of translational fidelity.

The protein localises to the plastid. The protein resides in the chloroplast. Its function is as follows. One of the primary rRNA binding proteins, it binds directly to 16S rRNA where it nucleates assembly of the body of the 30S subunit. Functionally, with S5 and S12 plays an important role in translational accuracy. The polypeptide is Small ribosomal subunit protein uS4c (rps4) (Trieres chinensis (Marine centric diatom)).